Consider the following 164-residue polypeptide: uncharacterized protein (164 aa).

Residues 1 to 77 (MGQKKTMGTE…PCSIRDAPFH (77 aa)) are disordered.

This is an uncharacterized protein from Homo sapiens (Human).